A 254-amino-acid polypeptide reads, in one-letter code: Uridine-cytidine kinase 1 (254 aa).

The disordered stretch occupies residues 1 to 29 (MASAGGDECEGAAPEADRPHQRPFLIGVS). 30-38 (GGTASGKST) lines the ATP pocket. Residues Asp87, Tyr115, His120, Arg146, Arg155, and Gln163 each contribute to the substrate site. Asp192 serves as a coordination point for ATP. The tract at residues 224–254 (SYKRTFSEPGDHPGMLTSGKRSHLESSSRPH) is disordered. The residue at position 228 (Thr228) is a Phosphothreonine. Position 230 is a phosphoserine (Ser230). The segment covering 245 to 254 (SHLESSSRPH) has biased composition (basic and acidic residues).

It belongs to the uridine kinase family.

It catalyses the reaction uridine + ATP = UMP + ADP + H(+). The enzyme catalyses cytidine + ATP = CMP + ADP + H(+). It participates in pyrimidine metabolism; CTP biosynthesis via salvage pathway; CTP from cytidine: step 1/3. The protein operates within pyrimidine metabolism; UMP biosynthesis via salvage pathway; UMP from uridine: step 1/1. In terms of biological role, phosphorylates uridine and cytidine to uridine monophosphate and cytidine monophosphate. Does not phosphorylate deoxyribonucleosides or purine ribonucleosides. Can use ATP or GTP as a phosphate donor. The protein is Uridine-cytidine kinase 1 (UCK1) of Macaca fascicularis (Crab-eating macaque).